The following is a 530-amino-acid chain: Bifunctional purine biosynthesis protein PurH (530 aa).

One can recognise an MGS-like domain in the interval 1-148 (MENSRPIKRA…KNHKDVGIVV (148 aa)).

It belongs to the PurH family.

It catalyses the reaction (6R)-10-formyltetrahydrofolate + 5-amino-1-(5-phospho-beta-D-ribosyl)imidazole-4-carboxamide = 5-formamido-1-(5-phospho-D-ribosyl)imidazole-4-carboxamide + (6S)-5,6,7,8-tetrahydrofolate. It carries out the reaction IMP + H2O = 5-formamido-1-(5-phospho-D-ribosyl)imidazole-4-carboxamide. It participates in purine metabolism; IMP biosynthesis via de novo pathway; 5-formamido-1-(5-phospho-D-ribosyl)imidazole-4-carboxamide from 5-amino-1-(5-phospho-D-ribosyl)imidazole-4-carboxamide (10-formyl THF route): step 1/1. The protein operates within purine metabolism; IMP biosynthesis via de novo pathway; IMP from 5-formamido-1-(5-phospho-D-ribosyl)imidazole-4-carboxamide: step 1/1. In Psychromonas ingrahamii (strain DSM 17664 / CCUG 51855 / 37), this protein is Bifunctional purine biosynthesis protein PurH.